Here is a 360-residue protein sequence, read N- to C-terminus: Aminomethyltransferase (360 aa).

It belongs to the GcvT family. In terms of assembly, the glycine cleavage system is composed of four proteins: P, T, L and H.

It carries out the reaction N(6)-[(R)-S(8)-aminomethyldihydrolipoyl]-L-lysyl-[protein] + (6S)-5,6,7,8-tetrahydrofolate = N(6)-[(R)-dihydrolipoyl]-L-lysyl-[protein] + (6R)-5,10-methylene-5,6,7,8-tetrahydrofolate + NH4(+). Functionally, the glycine cleavage system catalyzes the degradation of glycine. The protein is Aminomethyltransferase of Methylococcus capsulatus (strain ATCC 33009 / NCIMB 11132 / Bath).